The chain runs to 303 residues: Thioesterase poxG (303 aa).

The protein belongs to the lcsJ thioesterase family.

It participates in secondary metabolite biosynthesis. Its function is as follows. Thioesterase; part of the gene cluster that mediates the biosynthesis of oxaleimides, cytotoxic compounds containing an unusual disubstituted succinimide moiety. The first step of the pathway is provided by the HR-PKS poxF that serves in a new mode of collaborative biosynthesis with the PKS-NRPS poxE, by providing the olefin containing amino acid substrate via the synthesis of an ACP-bound dec-4-enoate. The cytochrome P450 monooxygenase poxM-catalyzed oxidation at the alpha-position creates the enzyme-bound 2-hydroxydec-4-enoyl-ACP thioester, which may be prone to spontaneous hydrolysis to yield 2-hydroxydec-4-enoic acid due to increased electrophilicity of the carbonyl. 2-hydroxydec-4-enoic acid can then be further oxidized by poxM to yield the alpha-ketoacid 2-oxodec-4-enoicacid, which is reductively aminated by the aminotransferase poxL to yield (S,E)-2-aminodec-4-enoic acid. The Hybrid PKS-NRPS synthetase poxE then performs condensation between the octaketide product of its PKS modules and the amino group of (S,E)-2-aminodec-4-enoic acid which is activated and incorporated by the adenylation domain. The resulting aminoacyl product can be cyclized by the Diels-Alderase PoxQ and reductively released by the reductive (R) domain of poxE to yield an aldehyde intermediate. The released aldehyde is then substrate for a Knoevenagel condensation by the hydrolyase poxO followed by an oxidation at the 5-position of the pyrrolidone ring. The presence of the olefin from the amino acid building block allows for migration of the substituted allyl group to occur. This allylic transposition reaction takes place in a conjugate addition, semipinacol-like fashion to yield a succinimide intermediate. Iterative two-electron oxidations of the C7 methyl of the succinimide intermediate to the carboxylic acid can be catalyzed by one of two remaining cytochrome P450 monooxygenasess poxC or poxD to yield oxaleimide A. Subsequent oxidation yields the maleimide scaffold oxaleimide I. Both oxaleimide A and oxaleimide I can undergo oxidative modifications in the decalin ring to yield the series of products oxaleimides B to H. The polypeptide is Thioesterase poxG (Penicillium oxalicum).